Consider the following 728-residue polypeptide: 1,4-alpha-glucan branching enzyme GlgB (728 aa).

D405 functions as the Nucleophile in the catalytic mechanism. Catalysis depends on E458, which acts as the Proton donor.

The protein belongs to the glycosyl hydrolase 13 family. GlgB subfamily. As to quaternary structure, monomer.

It catalyses the reaction Transfers a segment of a (1-&gt;4)-alpha-D-glucan chain to a primary hydroxy group in a similar glucan chain.. It functions in the pathway glycan biosynthesis; glycogen biosynthesis. In terms of biological role, catalyzes the formation of the alpha-1,6-glucosidic linkages in glycogen by scission of a 1,4-alpha-linked oligosaccharide from growing alpha-1,4-glucan chains and the subsequent attachment of the oligosaccharide to the alpha-1,6 position. This chain is 1,4-alpha-glucan branching enzyme GlgB, found in Escherichia coli O139:H28 (strain E24377A / ETEC).